Consider the following 827-residue polypeptide: Thymine dioxygenase JBP1 (827 aa).

Residues Gln-62 to Ala-264 form a thymine dioxygenase region. The Fe cation site is built by His-189, Asp-191, and His-239. A 2-oxoglutarate-binding site is contributed by Arg-255. Disordered regions lie at residues Pro-364–Leu-383 and Pro-539–Arg-568. A DNA-binding JBP1 domain region spans residues Thr-392–Pro-561. The segment covering Pro-539–Arg-557 has biased composition (basic and acidic residues).

The protein belongs to the TET family. JBP1 subfamily. Monomer. Binds to DNA as a monomer. Requires Fe(2+) as cofactor.

It is found in the nucleus. It carries out the reaction thymine + 2-oxoglutarate + O2 = 5-hydroxymethyluracil + succinate + CO2. In terms of biological role, dioxygenase that catalyzes the first step of DNA base J (beta-d-glucosyl-HOMedU) biosynthesis by converting thymine to 5-hydroxymethyluracil (HOMedU). DNA base J is a hypermodified thymidine residue found in the genome of kinetoplastid parasites, which is localized primarily to repetitive DNA, namely the telomeres, and is implicated in the regulation of antigenic variation. Also specifically binds to base J-containing DNA (J-DNA). Involved in propagation and maintenance of DNA base J synthesis initiated by JBP2 by specifically binding already synthesized DNA base J and propagating J synthesis. Thymine dioxygenase activity and J-DNA-binding are independent functions. The chain is Thymine dioxygenase JBP1 (JBP1) from Leishmania tarentolae (Sauroleishmania tarentolae).